We begin with the raw amino-acid sequence, 451 residues long: Methionine aminopeptidase 2-2 (451 aa).

A disordered region spans residues 1–101 (MAAKVADDVA…IDEVFPNDSY (101 aa)). Residues 37–51 (EHEDSDDDNEAEEGA) are compositionally biased toward acidic residues. Basic residues predominate over residues 60-73 (KKKKKRKPRKKKKA). A substrate-binding site is contributed by His204. A divalent metal cation-binding residues include Asp224, Asp235, and His304. Position 312 (His312) interacts with substrate. A divalent metal cation is bound by residues Glu337 and Glu432.

It belongs to the peptidase M24A family. Methionine aminopeptidase eukaryotic type 2 subfamily. It depends on Co(2+) as a cofactor. Requires Zn(2+) as cofactor. The cofactor is Mn(2+). Fe(2+) is required as a cofactor.

It is found in the cytoplasm. The enzyme catalyses Release of N-terminal amino acids, preferentially methionine, from peptides and arylamides.. Functionally, cotranslationally removes the N-terminal methionine from nascent proteins. The N-terminal methionine is often cleaved when the second residue in the primary sequence is small and uncharged (Met-Ala-, Cys, Gly, Pro, Ser, Thr, or Val). The chain is Methionine aminopeptidase 2-2 from Pyrenophora tritici-repentis (strain Pt-1C-BFP) (Wheat tan spot fungus).